A 22-amino-acid chain; its full sequence is C-type natriuretic peptide (22 aa).

An intrachain disulfide couples Cys-6 to Cys-22.

This sequence belongs to the natriuretic peptide family.

The protein resides in the secreted. Hormone which plays a role in endochondral ossification through regulation of cartilaginous growth plate chondrocytes proliferation and differentiation. May also be vasoactive and natriuretic. Specifically binds and stimulates the cGMP production of the NPR2 receptor. Binds the clearance receptor NPR3. The sequence is that of C-type natriuretic peptide (NPPC) from Gallus gallus (Chicken).